The primary structure comprises 386 residues: Glucose-1-phosphate adenylyltransferase (386 aa).

Residues tyrosine 100, glycine 165, 180–181 (EK), and serine 191 each bind alpha-D-glucose 1-phosphate.

This sequence belongs to the bacterial/plant glucose-1-phosphate adenylyltransferase family. In terms of assembly, homotetramer.

It carries out the reaction alpha-D-glucose 1-phosphate + ATP + H(+) = ADP-alpha-D-glucose + diphosphate. The protein operates within glycan biosynthesis; glycogen biosynthesis. Functionally, involved in the biosynthesis of ADP-glucose, a building block required for the elongation reactions to produce glycogen. Catalyzes the reaction between ATP and alpha-D-glucose 1-phosphate (G1P) to produce pyrophosphate and ADP-Glc. The polypeptide is Glucose-1-phosphate adenylyltransferase (Clostridium botulinum (strain Alaska E43 / Type E3)).